The sequence spans 378 residues: DNA replication and repair protein RecF (378 aa).

Residue 31 to 38 (GENGSGKT) participates in ATP binding.

It belongs to the RecF family.

It localises to the cytoplasm. Functionally, the RecF protein is involved in DNA metabolism; it is required for DNA replication and normal SOS inducibility. RecF binds preferentially to single-stranded, linear DNA. It also seems to bind ATP. The sequence is that of DNA replication and repair protein RecF from Teredinibacter turnerae (strain ATCC 39867 / T7901).